The sequence spans 189 residues: Thymidine kinase (189 aa).

Residues 9–16 (GTMNSGKT) and 85–88 (DESQ) each bind ATP. The Proton acceptor role is filled by Glu-86. The Zn(2+) site is built by Cys-143, Cys-146, Cys-180, and His-183.

The protein belongs to the thymidine kinase family. As to quaternary structure, homotetramer.

It localises to the cytoplasm. It carries out the reaction thymidine + ATP = dTMP + ADP + H(+). The chain is Thymidine kinase from Streptococcus pyogenes serotype M1.